The primary structure comprises 273 residues: HUWE1-associated protein modifying stress responses 2 (273 aa).

3 disordered regions span residues G146–V181, I204–D230, and K251–V273. Pro residues predominate over residues P149–P165. 3 stretches are compositionally biased toward polar residues: residues S170–V181, S208–A218, and S254–Q267. The interval I249–V273 is nuclear localization signal.

Belongs to the HAPSTR1 family. Homooligomer. Heterooligomer with HAPSTR1; the interaction is direct and stabilizes HAPSTR1 independently of HUWE1. Interacts with HUWE1. As to expression, expressed in a tissue-restricted manner compared to HAPSTR1.

Its subcellular location is the nucleus. Functionally, together with HAPSTR1 plays a central regulatory role in the cellular response to molecular stressors, such as DNA damage, nutrient scarcity, and protein misfolding. Regulates these multiple stress response signaling pathways by stabilizing HAPSTR1, but also independently of HAPSTR1. The chain is HUWE1-associated protein modifying stress responses 2 from Homo sapiens (Human).